We begin with the raw amino-acid sequence, 163 residues long: Nucleotide-binding protein Tery_2743 (163 aa).

It belongs to the YajQ family.

Nucleotide-binding protein. The protein is Nucleotide-binding protein Tery_2743 of Trichodesmium erythraeum (strain IMS101).